We begin with the raw amino-acid sequence, 1216 residues long: MAGAQPGVHALQLKPVCVSDSLKKGTKFVKWDDDSTIVTPIILRTDPQGFFFYWTDQNKETELLDLSLVKDARCGKHAKAPKDPKLRELLDVGNIGHLEQRMITVVYGPDLVNISHLNLVAFQEEVAKEWTNEVFSLATNLLAQNMSRDAFLEKAYTKLKLQVTPEGRIPLKNIYRLFSADRKRVETALEACSLPSSRNDSIPQEDFTPDVYRVFLNNLCPRPEIDNIFSEFGAKSKPYLTVDQMMDFINLKQRDPRLNEILYPPLKQEQVQVLIEKYEPNSSLAKKGQMSVDGFMRYLSGEENGVVSPEKLDLNEDMSQPLSHYFINSSHNTYLTAGQLAGNSSVEMYRQVLLSGCRCVELDCWKGRTAEEEPVITHGFTMTTEISFKEVIEAIAECAFKTSPFPILLSFENHVDSPKQQAKMAEYCRLIFGDALLMEPLEKYPLESGVPLPSPMDLMYKILVKNKKKSHKSSEGSGKKKLSEQASNTYSDSSSVFEPSSPGAGEADTESDDDDDDDDCKKSSMDEGTAGSEAMATEEMSNLVNYIQPVKFESFEISKKRNKSFEMSSFVETKGLEQLTKSPVEFVEYNKMQLSRIYPKGTRVDSSNYMPQLFWNAGCQMVALNFQTVDLAMQINMGMYEYNGKSGYRLKPEFMRRPDKHFDPFTEGIVDGIVANTLSVKIISGQFLSDKKVGTYVEVDMFGLPVDTRRKAFKTKTSQGNAVNPVWEEEPIVFKKVVLPSLACLRIAAYEEGGKFIGHRILPVQAIRPGYHYICLRNERNQPLTLPAVFVYIEVKDYVPDTYADVIEALSNPIRYVNLMEQRAKQLAALTLEDEEEVKKEADPGETSSEAPSETRTTPAENGVNHTASLAPKPPSQAPHSQPAPGSVKAPAKTEDLIQSVLTEVEAQTIEELKQQKSFVKLQKKHYKEMKDLVKRHHKKTTELIKEHTTKYNEIQNDYLRRRAALEKSAKKDSKKKSEPSSPDHGSSAIEQDLAALDAEMTQKLIDLKDKQQQQLLNLRQEQYYSEKYQKREHIKLLIQKLTDVAEECQNNQLKKLKEICEKEKKELKKKMDKKRQEKITEAKSKDKSQMEEEKTEMIRSYIQEVVQYIKRLEEAQSKRQEKLVEKHNEIRQQILDEKPKLQTELEQEYQDKFKRLPLEILEFVQEAMKGKISEDSNHGSAPPSLASDAAKVNLKSPSSEEIERENPGREFDTPL.

A lipid anchor (S-palmitoyl cysteine) is attached at C17. Position 236 is a phosphoserine (S236). Residues E316–K467 enclose the PI-PLC X-box domain. Residues H331 and H378 contribute to the active site. A Phosphoserine modification is found at S417. Residues K469 to A534 are disordered. Residues K472 to S483 are compositionally biased toward basic and acidic residues. The segment covering S491 to S501 has biased composition (low complexity). Residues A507–D518 are compositionally biased toward acidic residues. A Phosphothreonine modification is found at T509. Phosphoserine is present on residues S511 and S582. Positions M540–R656 constitute a PI-PLC Y-box domain. Residues R656 to L786 enclose the C2 domain. 4 disordered regions span residues D834 to P891, E967 to A989, M1072 to K1095, and I1173 to L1216. Polar residues predominate over residues E846–A868. A Phosphoserine; by PKC modification is found at S887. Basic and acidic residues predominate over residues E967 to E979. Phosphoserine is present on residues S978 and S987. Residues K1075 to K1095 are compositionally biased toward basic and acidic residues. S1197, S1199, and S1200 each carry phosphoserine. Over residues R1205–L1216 the composition is skewed to basic and acidic residues.

Interacts with DGKQ. Requires Ca(2+) as cofactor. Post-translationally, palmitoylated. Palmitoylation at Cys-17 by ZDHHC21 regulates the signaling activity of PLCB1 and the function of the endothelial barrier. Palmitoylation by ZDHHC21 is stimulated by inflammation.

The protein localises to the nucleus membrane. The protein resides in the cytoplasm. The catalysed reaction is a 1,2-diacyl-sn-glycero-3-phospho-(1D-myo-inositol-4,5-bisphosphate) + H2O = 1D-myo-inositol 1,4,5-trisphosphate + a 1,2-diacyl-sn-glycerol + H(+). It carries out the reaction a 1,2-diacyl-sn-glycero-3-phospho-(1D-myo-inositol) + H2O = 1D-myo-inositol 1-phosphate + a 1,2-diacyl-sn-glycerol + H(+). Functionally, catalyzes the hydrolysis of 1-phosphatidylinositol 4,5-bisphosphate into diacylglycerol (DAG) and inositol 1,4,5-trisphosphate (IP3) and mediates intracellular signaling downstream of G protein-coupled receptors. Regulates the function of the endothelial barrier. This Mus musculus (Mouse) protein is 1-phosphatidylinositol 4,5-bisphosphate phosphodiesterase beta-1.